The following is a 364-amino-acid chain: MKTNLLNYDLQGLTRHFADMGEKPFRAKQVMRWMHQSGAQNFDEMTDLAKSLRHKLNEQAGIEIPKLMMSQKSSDGTRKWLLDVGTGNGVETVFIPESDRGTLCISSQVGCALECTFCSTGRQGFNRNLTAAEIIGQLWWANKAMGVTPKNERVISNVVMMGMGEPMANFDNVVTALSIMLDDHGYGLSRRRVTVSTSGMVPQMDRLRDVMPVALAVSLHASNDEVRNQIVPLNKKYPLKELMAACQRYLVKAPRDFITFEYVMLDGINDKAQHARELIELVTDVPCKFNLIPFNPFPNSGYERSSNENIRVFRDILQQAGFVVTVRKTRGDDIDAACGQLAGQVQDKTRRQQKWQQILIGQQG.

E91 acts as the Proton acceptor in catalysis. In terms of domain architecture, Radical SAM core spans 97-333 (ESDRGTLCIS…VTVRKTRGDD (237 aa)). A disulfide bond links C104 and C338. [4Fe-4S] cluster contacts are provided by C111, C115, and C118. Residues 164–165 (GE), S196, 218–220 (SLH), and N295 each bind S-adenosyl-L-methionine. C338 (S-methylcysteine intermediate) is an active-site residue.

The protein belongs to the radical SAM superfamily. RlmN family. It depends on [4Fe-4S] cluster as a cofactor.

It localises to the cytoplasm. It catalyses the reaction adenosine(2503) in 23S rRNA + 2 reduced [2Fe-2S]-[ferredoxin] + 2 S-adenosyl-L-methionine = 2-methyladenosine(2503) in 23S rRNA + 5'-deoxyadenosine + L-methionine + 2 oxidized [2Fe-2S]-[ferredoxin] + S-adenosyl-L-homocysteine. It carries out the reaction adenosine(37) in tRNA + 2 reduced [2Fe-2S]-[ferredoxin] + 2 S-adenosyl-L-methionine = 2-methyladenosine(37) in tRNA + 5'-deoxyadenosine + L-methionine + 2 oxidized [2Fe-2S]-[ferredoxin] + S-adenosyl-L-homocysteine. Specifically methylates position 2 of adenine 2503 in 23S rRNA and position 2 of adenine 37 in tRNAs. m2A2503 modification seems to play a crucial role in the proofreading step occurring at the peptidyl transferase center and thus would serve to optimize ribosomal fidelity. The polypeptide is Dual-specificity RNA methyltransferase RlmN (Neisseria meningitidis serogroup B (strain ATCC BAA-335 / MC58)).